The chain runs to 99 residues: Nucleoid-associated protein SEQ_0368 (99 aa).

This sequence belongs to the YbaB/EbfC family. In terms of assembly, homodimer.

It localises to the cytoplasm. The protein resides in the nucleoid. Functionally, binds to DNA and alters its conformation. May be involved in regulation of gene expression, nucleoid organization and DNA protection. In Streptococcus equi subsp. equi (strain 4047), this protein is Nucleoid-associated protein SEQ_0368.